Reading from the N-terminus, the 427-residue chain is F-box protein At2g16450 (427 aa).

An F-box domain is found at M1 to L45.

The protein is F-box protein At2g16450 of Arabidopsis thaliana (Mouse-ear cress).